The primary structure comprises 353 residues: UDP-3-O-acylglucosamine N-acyltransferase (353 aa).

Catalysis depends on H258, which acts as the Proton acceptor.

This sequence belongs to the transferase hexapeptide repeat family. LpxD subfamily. In terms of assembly, homotrimer.

The catalysed reaction is a UDP-3-O-[(3R)-3-hydroxyacyl]-alpha-D-glucosamine + a (3R)-hydroxyacyl-[ACP] = a UDP-2-N,3-O-bis[(3R)-3-hydroxyacyl]-alpha-D-glucosamine + holo-[ACP] + H(+). Its pathway is bacterial outer membrane biogenesis; LPS lipid A biosynthesis. Its function is as follows. Catalyzes the N-acylation of UDP-3-O-acylglucosamine using 3-hydroxyacyl-ACP as the acyl donor. Is involved in the biosynthesis of lipid A, a phosphorylated glycolipid that anchors the lipopolysaccharide to the outer membrane of the cell. This chain is UDP-3-O-acylglucosamine N-acyltransferase, found in Parvibaculum lavamentivorans (strain DS-1 / DSM 13023 / NCIMB 13966).